A 491-amino-acid polypeptide reads, in one-letter code: UDP-N-acetylmuramate--L-alanine ligase (491 aa).

126–132 (GTHGKTT) serves as a coordination point for ATP.

Belongs to the MurCDEF family.

It is found in the cytoplasm. It catalyses the reaction UDP-N-acetyl-alpha-D-muramate + L-alanine + ATP = UDP-N-acetyl-alpha-D-muramoyl-L-alanine + ADP + phosphate + H(+). It participates in cell wall biogenesis; peptidoglycan biosynthesis. In terms of biological role, cell wall formation. In Escherichia coli (strain SMS-3-5 / SECEC), this protein is UDP-N-acetylmuramate--L-alanine ligase.